A 798-amino-acid polypeptide reads, in one-letter code: uncharacterized protein (798 aa).

A compositionally biased stretch (low complexity) spans 1–13 (MSSSQSPSTPSAS). Residues 1-58 (MSSSQSPSTPSASLVDSSDSKHPDDLPQIYKRRSVWTSSEDAVSSSNSPEQTTPFTVR) constitute a chloroplast transit peptide. Disordered stretches follow at residues 1 to 99 (MSSS…WQDA), 135 to 158 (AEKK…SMCT), and 417 to 473 (TGLI…AEPS). Over residues 35-55 (VWTSSEDAVSSSNSPEQTTPF) the composition is skewed to polar residues. A compositionally biased stretch (basic and acidic residues) spans 57 to 79 (VREDTNADIARELDLPDDPEPHL). The span at 137-146 (KKKRKKKKKA) shows a compositional bias: basic residues. Over residues 462–473 (AAPAEAQGAEPS) the composition is skewed to low complexity. Residues 578 to 658 (RSNMEVAGKL…MLSEARGLRD (81 aa)) adopt a coiled-coil conformation. The tract at residues 749-798 (DDLKAPAPEPAPLSPGGHRSVESLADEAGITDQAGSLLPAKDNRPSEDLD) is disordered. At serine 762 the chain carries Phosphoserine. Over residues 789-798 (KDNRPSEDLD) the composition is skewed to basic and acidic residues.

It is found in the plastid. It localises to the chloroplast. This is an uncharacterized protein from Arabidopsis thaliana (Mouse-ear cress).